The chain runs to 435 residues: Glycine reductase complex component B subunit gamma (435 aa).

Residue Sec350 is part of the active site. A non-standard amino acid (selenocysteine) is located at residue Sec350.

It belongs to the GrdB/GrdF/GrdH family. In terms of assembly, heterohexamer of two alpha, two beta and two gamma subunits. Component of the glycine reductase complex, together with components A and C. PB is substrate specific.

The catalysed reaction is acetyl phosphate + [thioredoxin]-disulfide + NH4(+) + H2O = [thioredoxin]-dithiol + glycine + phosphate + H(+). In the first step of glycine reductase, the substrate is bound to component PB via a Schiff base intermediate. Then the PB-activated substrate is nucleophilically attacked by the selenol anion of component PA to transform it to a carboxymethylated selenoether and the respective amine. By action of component PC, acetyl phosphate is formed, leaving component PA in its oxidized state. Finally component PA becomes reduced by the thioredoxin system to start a new catalytic cycle of reductive deamination. The chain is Glycine reductase complex component B subunit gamma (grdB) from Carboxydothermus hydrogenoformans (strain ATCC BAA-161 / DSM 6008 / Z-2901).